We begin with the raw amino-acid sequence, 143 residues long: Large ribosomal subunit protein uL13 (143 aa).

This sequence belongs to the universal ribosomal protein uL13 family. As to quaternary structure, part of the 50S ribosomal subunit.

This protein is one of the early assembly proteins of the 50S ribosomal subunit, although it is not seen to bind rRNA by itself. It is important during the early stages of 50S assembly. This is Large ribosomal subunit protein uL13 from Carboxydothermus hydrogenoformans (strain ATCC BAA-161 / DSM 6008 / Z-2901).